Reading from the N-terminus, the 674-residue chain is Oxidative stress response two-component system protein SSK1 (674 aa).

The segment covering Ser66–Asn75 has biased composition (polar residues). Disordered stretches follow at residues Ser66–Lys115, Gln259–Thr354, and Ala372–Thr497. Over residues Glu90–Asp99 the composition is skewed to basic and acidic residues. Polar residues predominate over residues Asn101–Lys115. Over residues Asn264–Asn276 the composition is skewed to low complexity. Polar residues-rich tracts occupy residues Met302–Val314 and Val323–Val336. 2 stretches are compositionally biased toward low complexity: residues Ser343–Val352 and Ala372–Ser383. Over residues Val391 to Asp416 the composition is skewed to basic and acidic residues. Residues Gln422–Gln433 are compositionally biased toward low complexity. A compositionally biased stretch (polar residues) spans Ser434–Ser444. The segment covering Thr459–Ser481 has biased composition (low complexity). One can recognise a Response regulatory domain in the interval Ser507–Gly653. A 4-aspartylphosphate modification is found at Asp556.

It belongs to the SSK1 family.

In terms of biological role, final receptor of the SLN1-YPD1-SSK1 two-component regulatory system, which controls activity of the HOG1 pathway in response to oxidative stress and probably also to the osmolarity of the extracellular environment. Involved in cell wall biosynthesis, hyphal growth, and virulence. Regulates the expression of CHK1, as well as of a subset of genes whose functions are associated with cell wall biosynthesis and adaptation to oxidative stress. Provides at least partial adaptive functions for the survival following encounter with human neutrophils. In Candida albicans (strain SC5314 / ATCC MYA-2876) (Yeast), this protein is Oxidative stress response two-component system protein SSK1 (SSK1).